A 478-amino-acid chain; its full sequence is MARCCFYTAGTLSLLLLVTSVTLLVARVFQKAVDQTIEKNMVLQNGTKVFDSWEKPPLPVYIQFYFFNVTNPEEILQGEIPLLEEVGPYTYRELRNKANVQFGENGTTISAVTNKAYIFERNQSVGDPTVDLIRTINIPLLTVVEMAQQPFLREIIEAMLKAYQQTLFVTHTVHELLWGYKDEVLSLVHIFRPDVSPNFGLFYERNGTNDGEYVFLTGEDNYLNFTKIVEWNGKTSLDWWTTDTCNMINGTDGDSFHPLISKDETLYIFPSDFCRSVYITFSSFENVEGLPAFRYKVPAEILANSSENAGFCIPEGNCMDAGVLNVSICKNGAPIIMSFPHFYQADEKFVSAIKGMRPNKEEHESFVDINPLTGIILRGAKRFQINTYVKKLDDFVETGNIRTMVFPVMYLNESVLIDKETASQLKSVINTTLIVTNIPYIIMALGVFFGLIFTWLACRGQGSTDEGTADERAPLIRT.

Residues 2–4 (ARC) lie on the Cytoplasmic side of the membrane. A helical membrane pass occupies residues 5–27 (CFYTAGTLSLLLLVTSVTLLVAR). Residues 28–433 (VFQKAVDQTI…QLKSVINTTL (406 aa)) are Lumenal-facing. Asparagine 45, asparagine 68, asparagine 105, and asparagine 122 each carry an N-linked (GlcNAc...) asparagine glycan. Residues 155-191 (IIEAMLKAYQQTLFVTHTVHELLWGYKDEVLSLVHIF) form an important for interaction with GBA1 region. Asparagine 206, asparagine 224, asparagine 249, and asparagine 304 each carry an N-linked (GlcNAc...) asparagine glycan. 2 disulfide bridges follow: cysteine 274-cysteine 329 and cysteine 312-cysteine 318. Residues asparagine 325, asparagine 412, and asparagine 430 are each glycosylated (N-linked (GlcNAc...) asparagine). The chain crosses the membrane as a helical span at residues 434-459 (IVTNIPYIIMALGVFFGLIFTWLACR). The Cytoplasmic portion of the chain corresponds to 460 to 478 (GQGSTDEGTADERAPLIRT).

It belongs to the CD36 family. As to quaternary structure, interacts with GBA1. Post-translationally, acylated by palmitic acid group(s).

It is found in the lysosome membrane. Functionally, acts as a lysosomal receptor for glucosylceramidase (GBA1) targeting. This Rattus norvegicus (Rat) protein is Lysosome membrane protein 2 (Scarb2).